Consider the following 409-residue polypeptide: Tryptophan synthase beta chain (409 aa).

Position 100 is an N6-(pyridoxal phosphate)lysine (Lys-100).

The protein belongs to the TrpB family. Tetramer of two alpha and two beta chains. The cofactor is pyridoxal 5'-phosphate.

It catalyses the reaction (1S,2R)-1-C-(indol-3-yl)glycerol 3-phosphate + L-serine = D-glyceraldehyde 3-phosphate + L-tryptophan + H2O. It functions in the pathway amino-acid biosynthesis; L-tryptophan biosynthesis; L-tryptophan from chorismate: step 5/5. Functionally, the beta subunit is responsible for the synthesis of L-tryptophan from indole and L-serine. This chain is Tryptophan synthase beta chain, found in Pyrobaculum arsenaticum (strain DSM 13514 / JCM 11321 / PZ6).